The primary structure comprises 353 residues: UPF0283 membrane protein YcjF (353 aa).

Helical transmembrane passes span 70–90 (MVMG…VQWT), 100–120 (VALG…GSVV), and 213–233 (ESTL…FIAW).

It belongs to the UPF0283 family.

It localises to the cell inner membrane. The protein is UPF0283 membrane protein YcjF of Escherichia coli O139:H28 (strain E24377A / ETEC).